A 446-amino-acid polypeptide reads, in one-letter code: WEB family protein At3g56270 (446 aa).

A coiled-coil region spans residues 313 to 349 (TNVSRIEILRKLEEANEEVKQSKQALEVALNRVEIAS).

It belongs to the WEB family.

The chain is WEB family protein At3g56270 from Arabidopsis thaliana (Mouse-ear cress).